An 89-amino-acid chain; its full sequence is Small ribosomal subunit protein uS14 (89 aa).

It belongs to the universal ribosomal protein uS14 family. Part of the 30S ribosomal subunit. Contacts proteins S3 and S10.

Its function is as follows. Binds 16S rRNA, required for the assembly of 30S particles and may also be responsible for determining the conformation of the 16S rRNA at the A site. The protein is Small ribosomal subunit protein uS14 of Akkermansia muciniphila (strain ATCC BAA-835 / DSM 22959 / JCM 33894 / BCRC 81048 / CCUG 64013 / CIP 107961 / Muc).